An 88-amino-acid polypeptide reads, in one-letter code: Small ribosomal subunit protein bS20 (88 aa).

Belongs to the bacterial ribosomal protein bS20 family.

Functionally, binds directly to 16S ribosomal RNA. In Bradyrhizobium sp. (strain BTAi1 / ATCC BAA-1182), this protein is Small ribosomal subunit protein bS20.